Consider the following 160-residue polypeptide: SsrA-binding protein (160 aa).

Belongs to the SmpB family.

Its subcellular location is the cytoplasm. Functionally, required for rescue of stalled ribosomes mediated by trans-translation. Binds to transfer-messenger RNA (tmRNA), required for stable association of tmRNA with ribosomes. tmRNA and SmpB together mimic tRNA shape, replacing the anticodon stem-loop with SmpB. tmRNA is encoded by the ssrA gene; the 2 termini fold to resemble tRNA(Ala) and it encodes a 'tag peptide', a short internal open reading frame. During trans-translation Ala-aminoacylated tmRNA acts like a tRNA, entering the A-site of stalled ribosomes, displacing the stalled mRNA. The ribosome then switches to translate the ORF on the tmRNA; the nascent peptide is terminated with the 'tag peptide' encoded by the tmRNA and targeted for degradation. The ribosome is freed to recommence translation, which seems to be the essential function of trans-translation. The protein is SsrA-binding protein of Klebsiella pneumoniae (strain 342).